The primary structure comprises 134 residues: NADH-quinone oxidoreductase subunit A 1 (134 aa).

Transmembrane regions (helical) follow at residues 10–30, 65–85, and 94–114; these read LIPL…LLLA, FYLI…ILAW, and IPGL…LVWL.

The protein belongs to the complex I subunit 3 family. In terms of assembly, NDH-1 is composed of 14 different subunits. Subunits NuoA, H, J, K, L, M, N constitute the membrane sector of the complex.

The protein localises to the cell inner membrane. It carries out the reaction a quinone + NADH + 5 H(+)(in) = a quinol + NAD(+) + 4 H(+)(out). NDH-1 shuttles electrons from NADH, via FMN and iron-sulfur (Fe-S) centers, to quinones in the respiratory chain. The immediate electron acceptor for the enzyme in this species is believed to be ubiquinone. Couples the redox reaction to proton translocation (for every two electrons transferred, four hydrogen ions are translocated across the cytoplasmic membrane), and thus conserves the redox energy in a proton gradient. This chain is NADH-quinone oxidoreductase subunit A 1, found in Citrifermentans bemidjiense (strain ATCC BAA-1014 / DSM 16622 / JCM 12645 / Bem) (Geobacter bemidjiensis).